We begin with the raw amino-acid sequence, 832 residues long: Protein P (832 aa).

The segment at methionine 1–glutamine 177 is terminal protein domain (TP). The interval lysine 178–leucine 335 is spacer. 2 disordered regions span residues phenylalanine 186–serine 229 and tyrosine 275–serine 305. Residues glutamate 336–glutamine 679 form a polymerase/reverse transcriptase domain (RT) region. Residues glutamate 346–isoleucine 589 enclose the Reverse transcriptase domain. Mg(2+)-binding residues include aspartate 418, aspartate 540, and aspartate 541.

It belongs to the hepadnaviridae P protein family.

It carries out the reaction DNA(n) + a 2'-deoxyribonucleoside 5'-triphosphate = DNA(n+1) + diphosphate. The enzyme catalyses Endonucleolytic cleavage to 5'-phosphomonoester.. Its activity is regulated as follows. Activated by host HSP70 and HSP40 in vitro to be able to bind the epsilon loop of the pgRNA. Because deletion of the RNase H region renders the protein partly chaperone-independent, the chaperones may be needed indirectly to relieve occlusion of the RNA-binding site by this domain. Inhibited by several reverse-transcriptase inhibitors: Lamivudine, Adefovir and Entecavir. Multifunctional enzyme that converts the viral RNA genome into dsDNA in viral cytoplasmic capsids. This enzyme displays a DNA polymerase activity that can copy either DNA or RNA templates, and a ribonuclease H (RNase H) activity that cleaves the RNA strand of RNA-DNA heteroduplexes in a partially processive 3'- to 5'-endonucleasic mode. Neo-synthesized pregenomic RNA (pgRNA) are encapsidated together with the P protein, and reverse-transcribed inside the nucleocapsid. Initiation of reverse-transcription occurs first by binding the epsilon loop on the pgRNA genome, and is initiated by protein priming, thereby the 5'-end of (-)DNA is covalently linked to P protein. Partial (+)DNA is synthesized from the (-)DNA template and generates the relaxed circular DNA (RC-DNA) genome. After budding and infection, the RC-DNA migrates in the nucleus, and is converted into a plasmid-like covalently closed circular DNA (cccDNA). The activity of P protein does not seem to be necessary for cccDNA generation, and is presumably released from (+)DNA by host nuclear DNA repair machinery. The polypeptide is Protein P (Homo sapiens (Human)).